A 79-amino-acid polypeptide reads, in one-letter code: Protein AC4 (79 aa).

Disordered stretches follow at residues 1-24 (MCSYSSKANTNARITDSSIWSPQP) and 36-79 (LNPA…MPRR). Low complexity predominate over residues 38–47 (PAPTSSPTST). Residues 48 to 61 (RTEIQLNGENSRST) are compositionally biased toward polar residues.

It belongs to the geminiviridae protein AC4/C4 family.

Its function is as follows. Pathogenicity determinant. May act as a suppressor of RNA-mediated gene silencing, also known as post-transcriptional gene silencing (PTGS), a mechanism of plant viral defense that limits the accumulation of viral RNAs. The sequence is that of Protein AC4 from Abutilon (Upland cotton).